A 259-amino-acid polypeptide reads, in one-letter code: Dihydroorotate dehydrogenase B (NAD(+)), electron transfer subunit (259 aa).

The 101-residue stretch at 2-102 (MQKQNMIVVN…LGPLGHGFPV (101 aa)) folds into the FAD-binding FR-type domain. FAD contacts are provided by residues 53–56 (RPIS), 70–72 (LYR), and 77–78 (GT). Positions 221, 226, 229, and 246 each coordinate [2Fe-2S] cluster.

It belongs to the PyrK family. As to quaternary structure, heterotetramer of 2 PyrK and 2 PyrD type B subunits. [2Fe-2S] cluster is required as a cofactor. It depends on FAD as a cofactor.

It participates in pyrimidine metabolism; UMP biosynthesis via de novo pathway; orotate from (S)-dihydroorotate (NAD(+) route): step 1/1. In terms of biological role, responsible for channeling the electrons from the oxidation of dihydroorotate from the FMN redox center in the PyrD type B subunit to the ultimate electron acceptor NAD(+). In Bacillus mycoides (strain KBAB4) (Bacillus weihenstephanensis), this protein is Dihydroorotate dehydrogenase B (NAD(+)), electron transfer subunit.